The chain runs to 446 residues: AP-2 complex subunit mu (446 aa).

Phosphoserine is present on residues Ser-145, Ser-151, and Ser-152. Residue Thr-157 is modified to Phosphothreonine. The MHD domain maps to 177 to 445 (KNSIYIDIVE…STRAGTCEIR (269 aa)).

It belongs to the adaptor complexes medium subunit family. In terms of assembly, adaptor protein complex 2 (AP-2) is a heterotetramer composed of two large adaptins (alpha-type subunit apl3 and beta-type subunit apl1), a medium chain (mu-type subunit apm4) and a small adaptin (sigma-type subunit aps2).

The protein resides in the cell membrane. Its subcellular location is the membrane. The protein localises to the coated pit. Its function is as follows. Component of the adaptor complexes which link clathrin to receptors in coated vesicles. Clathrin-associated protein complexes are believed to interact with the cytoplasmic tails of membrane proteins, leading to their selection and concentration. AP50 is a subunit of the plasma membrane adaptor (Potential). This Schizosaccharomyces pombe (strain 972 / ATCC 24843) (Fission yeast) protein is AP-2 complex subunit mu (apm4).